The following is a 272-amino-acid chain: tRNA (guanine-N(7)-)-methyltransferase (272 aa).

Positions 1–20 are enriched in basic and acidic residues; that stretch reads MSTDSESKRRAYREEKEGAR. Residues 1–43 form a disordered region; sequence MSTDSESKRRAYREEKEGARKKSVKLAPEATPESKPDLPRKRY. Residues Gly-89, 112–113, 148–149, and Cys-168 each bind S-adenosyl-L-methionine; these read EI and NA. Residue Asp-171 is part of the active site. Position 246-248 (246-248) interacts with S-adenosyl-L-methionine; the sequence is TEE.

The protein belongs to the class I-like SAM-binding methyltransferase superfamily. TrmB family. As to quaternary structure, forms a complex with TRM82.

The protein localises to the nucleus. It carries out the reaction guanosine(46) in tRNA + S-adenosyl-L-methionine = N(7)-methylguanosine(46) in tRNA + S-adenosyl-L-homocysteine. It participates in tRNA modification; N(7)-methylguanine-tRNA biosynthesis. Catalyzes the formation of N(7)-methylguanine at position 46 (m7G46) in tRNA. The chain is tRNA (guanine-N(7)-)-methyltransferase from Meyerozyma guilliermondii (strain ATCC 6260 / CBS 566 / DSM 6381 / JCM 1539 / NBRC 10279 / NRRL Y-324) (Yeast).